The chain runs to 328 residues: MERDNGTIQAPGLPPTTCVYREDFKRLLLPPVYSVVLVVGLPLNVCVIAQICASRRTLTRSAVYTLNLALADLLYACSLPLLIYNYARGDHWPFGDLACRLVRFLFYANLHGSILFLTCISFQRYLGICHPLAPWHKRGGRRAAWVVCGVVWLVVTAQCLPTAVFAATGIQRNRTVCYDLSPPILSTRYLPYGMALTVIGFLLPFTALLACYCRMARRLCRQDGPAGPVAQERRSKAARMAVVVAAVFVISFLPFHITKTAYLAVRSTPGVSCPVLETFAAAYKGTRPFASANSVLDPILFYFTQQKFRRQPHDLLQKLTAKWQRQRV.

Topologically, residues 1–27 (MERDNGTIQAPGLPPTTCVYREDFKRL) are extracellular. Residue asparagine 5 is glycosylated (N-linked (GlcNAc...) asparagine). A helical transmembrane segment spans residues 28–48 (LLPPVYSVVLVVGLPLNVCVI). The Cytoplasmic portion of the chain corresponds to 49 to 62 (AQICASRRTLTRSA). The helical transmembrane segment at 63-83 (VYTLNLALADLLYACSLPLLI) threads the bilayer. Topologically, residues 84 to 101 (YNYARGDHWPFGDLACRL) are extracellular. A disulfide bridge links cysteine 99 with cysteine 177. Residues 102 to 122 (VRFLFYANLHGSILFLTCISF) form a helical membrane-spanning segment. Residues 123 to 144 (QRYLGICHPLAPWHKRGGRRAA) lie on the Cytoplasmic side of the membrane. Residues 145 to 165 (WVVCGVVWLVVTAQCLPTAVF) form a helical membrane-spanning segment. Topologically, residues 166 to 194 (AATGIQRNRTVCYDLSPPILSTRYLPYGM) are extracellular. Asparagine 173 carries an N-linked (GlcNAc...) asparagine glycan. A helical membrane pass occupies residues 195–215 (ALTVIGFLLPFTALLACYCRM). The Cytoplasmic portion of the chain corresponds to 216–236 (ARRLCRQDGPAGPVAQERRSK). The chain crosses the membrane as a helical span at residues 237–257 (AARMAVVVAAVFVISFLPFHI). Topologically, residues 258 to 280 (TKTAYLAVRSTPGVSCPVLETFA) are extracellular. A helical transmembrane segment spans residues 281-303 (AAYKGTRPFASANSVLDPILFYF). Residues 304–328 (TQQKFRRQPHDLLQKLTAKWQRQRV) are Cytoplasmic-facing.

This sequence belongs to the G-protein coupled receptor 1 family. Abundantly expressed in various tissues including lung, stomach, intestine, spleen, mesentery, heart, and, most prominently, aorta.

It is found in the cell membrane. Receptor for extracellular UTP &gt; ADP = 2-methylthio-ATP &gt; ADP-beta-S &gt; ATP = ATP-gamma-S. The activity of this receptor is mediated by G proteins which activate a phosphatidylinositol-calcium second messenger system. Functionally coupled to phospholipase C. This chain is P2Y purinoceptor 6 (P2ry6), found in Rattus norvegicus (Rat).